Here is a 1290-residue protein sequence, read N- to C-terminus: 1-phosphatidylinositol 4,5-bisphosphate phosphodiesterase gamma-1 (1290 aa).

Ala-2 carries the N-acetylalanine modification. A PH 1 domain is found at 27–142 (RSLEVGTVMT…WIKGLTWLME (116 aa)). In terms of domain architecture, EF-hand spans 152–187 (QIERWLRKQFYSVDRNREDRISAKDLKNMLSQVNYR). Ca(2+) is bound by residues Asp-165, Asn-167, Glu-169, Arg-171, and Asp-176. Positions 320–464 (DTMNNPLSHY…LKRKILIKHK (145 aa)) constitute a PI-PLC X-box domain. Residues His-335 and His-380 contribute to the active site. Residues 489–523 (SIKNGILYLEDPVNHEWYPHYFVLTSSKIYYSEET) form the PH 2; first part domain. Tyr-506 is subject to Phosphotyrosine. A disordered region spans residues 522–544 (ETSSDQGNEDEEEPKEVSSSTEL). SH2 domains follow at residues 550 to 657 (WFHG…SEPV) and 668 to 756 (WYHA…RYPI). Position 771 is a phosphotyrosine; by SYK (Tyr-771). At Tyr-775 the chain carries Phosphotyrosine. Phosphotyrosine; by ITK, SYK and TXK is present on Tyr-783. The SH3 domain maps to 791–851 (TFKCAVKALF…PSNYVEEMVN (61 aa)). The PH 2; second part domain occupies 895 to 931 (FVFSISMASVAHWSLDVAADSQEELQDWVKKIREVAQ). The 118-residue stretch at 953 to 1070 (LSELVVYCRP…GYVLQPSTMR (118 aa)) folds into the PI-PLC Y-box domain. Residue Tyr-977 is modified to Phosphotyrosine. The region spanning 1071–1194 (DEAFDPFDKS…TGYRAVPLKN (124 aa)) is the C2 domain. A phosphoserine mark is found at Ser-1221, Pro-1222, Ser-1227, Ser-1233, and Ser-1248. Tyr-1253 carries the post-translational modification Phosphotyrosine. Ser-1263 bears the Phosphoserine mark. The disordered stretch occupies residues 1271-1290 (FDSRERRAPRRTRVNGDNRL).

In terms of assembly, interacts with AGAP2 via its SH3 domain. Interacts (via SH2 domain) with RET. Interacts with FLT1 (tyrosine-phosphorylated). Interacts (via SH2 domain) with FGFR1, FGFR2, FGFR3 and FGFR4 (phosphorylated). Interacts with LAT (phosphorylated) upon TCR activation. Interacts (via SH3 domain) with the Pro-rich domain of TNK1. Associates with BLNK, VAV1, GRB2 and NCK1 in a B-cell antigen receptor-dependent fashion. Interacts with CBLB in activated T-cells; which inhibits phosphorylation. Interacts with SHB. Interacts (via SH3 domain) with the Arg/Gly-rich-flanked Pro-rich domains of KHDRBS1/SAM68. This interaction is selectively regulated by arginine methylation of KHDRBS1/SAM68. Interacts with INPP5D/SHIP1, THEMIS and CLNK. Interacts with AXL, FLT4 and KIT. Interacts with RALGPS1. Interacts (via the SH2 domains) with VIL1 (phosphorylated at C-terminus tyrosine phosphorylation sites). Interacts (via SH2 domain) with PDGFRA and PDGFRB (tyrosine phosphorylated). Interacts with PIP5K1C. Interacts with NTRK1 and NTRK2 (phosphorylated upon ligand-binding). Interacts with SYK; activates PLCG1. Interacts with GRB2, LAT and THEMIS upon TCR activation in thymocytes. Interacts with TESPA1; the association is increased with prolonged stimulation of the TCR and may facilitate the assembly of the LAT signalosome. Interacts (via C-terminal proline-rich domain (PRD)) with PLCG1 (via SH3 domain); this interaction leads to guanine nucleotide exchange from PlCG1 to DNM1 and enhances DNM1-dependent endocytosis. (Microbial infection) Interacts (via SH3 domain) with HEV ORF3 protein. Ca(2+) is required as a cofactor. In terms of processing, tyrosine phosphorylated in response to signaling via activated FLT3, KIT and PDGFRA. Tyrosine phosphorylated by activated FGFR1, FGFR2, FGFR3 and FGFR4. Tyrosine phosphorylated by activated FLT1 and KDR. Tyrosine phosphorylated by activated PDGFRB. The receptor-mediated activation of PLCG1 involves its phosphorylation by tyrosine kinases, in response to ligation of a variety of growth factor receptors and immune system receptors. For instance, SYK phosphorylates and activates PLCG1 in response to ligation of the B-cell receptor. May be dephosphorylated by PTPRJ. Phosphorylated by ITK and TXK on Tyr-783 upon TCR activation in T-cells. Ubiquitinated by CBLB in activated T-cells.

The protein resides in the cell projection. It is found in the lamellipodium. It localises to the ruffle. It carries out the reaction a 1,2-diacyl-sn-glycero-3-phospho-(1D-myo-inositol-4,5-bisphosphate) + H2O = 1D-myo-inositol 1,4,5-trisphosphate + a 1,2-diacyl-sn-glycerol + H(+). It catalyses the reaction a 1,2-diacyl-sn-glycero-3-phospho-(1D-myo-inositol) + H2O = 1D-myo-inositol 1-phosphate + a 1,2-diacyl-sn-glycerol + H(+). With respect to regulation, activated by phosphorylation on tyrosine residues. In terms of biological role, mediates the production of the second messenger molecules diacylglycerol (DAG) and inositol 1,4,5-trisphosphate (IP3). Plays an important role in the regulation of intracellular signaling cascades. Becomes activated in response to ligand-mediated activation of receptor-type tyrosine kinases, such as PDGFRA, PDGFRB, EGFR, FGFR1, FGFR2, FGFR3 and FGFR4. Plays a role in actin reorganization and cell migration. Guanine nucleotide exchange factor that binds the GTPase DNM1 and catalyzes the dissociation of GDP, allowing a GTP molecule to bind in its place, therefore enhancing DNM1-dependent endocytosis. In Homo sapiens (Human), this protein is 1-phosphatidylinositol 4,5-bisphosphate phosphodiesterase gamma-1.